The sequence spans 1046 residues: Protein HBT1 (1046 aa).

3 disordered regions span residues M1–K455, D469–A894, and P908–I1046. A Phosphoserine modification is found at S41. Basic and acidic residues predominate over residues K81–R96. 3 stretches are compositionally biased toward polar residues: residues A98–T149, I175–V191, and A228–S301. Residue S303 is modified to Phosphoserine. The span at V327 to M341 shows a compositional bias: polar residues. Residue S363 is modified to Phosphoserine. Polar residues-rich tracts occupy residues Q389–M408 and G420–H429. Positions D430 to K455 are enriched in basic and acidic residues. Polar residues predominate over residues Y488–L498. At S491 the chain carries Phosphoserine. The segment covering G529–R538 has biased composition (basic and acidic residues). A compositionally biased stretch (polar residues) spans Q548–D559. Residue S561 is modified to Phosphoserine. Residues G570 to V582 are compositionally biased toward polar residues. A compositionally biased stretch (basic and acidic residues) spans M586–K597. Residues Y605–D619 are compositionally biased toward acidic residues. Residues S621–S630 are compositionally biased toward basic and acidic residues. Residue S671 is modified to Phosphoserine. A compositionally biased stretch (polar residues) spans F742–T756. Residues D773–L782 are compositionally biased toward basic and acidic residues. Polar residues-rich tracts occupy residues N792 to K802 and S837 to Y855. Phosphotyrosine is present on Y855. S857 bears the Phosphoserine mark. The span at K868–D890 shows a compositional bias: basic and acidic residues. The segment covering D922–Q951 has biased composition (polar residues). Low complexity predominate over residues G952–G963. Residues K964–R976 are compositionally biased toward basic residues. S1005 bears the Phosphoserine mark. Over residues D1006 to E1019 the composition is skewed to acidic residues. S1034 bears the Phosphoserine mark.

Conjugated with HUB1. HUB1 has not the classical C-terminal Gly residue, so it is still unknown how conjugation may occur.

It localises to the cytoplasm. In terms of biological role, polarity-determining protein which forms a conjugate with the ubiquitin-like modifier HUB1. Involved in bud site selection and cellular morphogenesis during conjugation. Required for survival during stationary phase. This Saccharomyces cerevisiae (strain ATCC 204508 / S288c) (Baker's yeast) protein is Protein HBT1 (HBT1).